Reading from the N-terminus, the 165-residue chain is Putative pre-16S rRNA nuclease (165 aa).

It belongs to the YqgF nuclease family.

Its subcellular location is the cytoplasm. Could be a nuclease involved in processing of the 5'-end of pre-16S rRNA. The sequence is that of Putative pre-16S rRNA nuclease from Sinorhizobium medicae (strain WSM419) (Ensifer medicae).